We begin with the raw amino-acid sequence, 218 residues long: Peptide deformylase (218 aa).

2 residues coordinate Fe cation: Cys130 and His172. Residue Glu173 is part of the active site. His176 contacts Fe cation.

Belongs to the polypeptide deformylase family. It depends on Fe(2+) as a cofactor.

It catalyses the reaction N-terminal N-formyl-L-methionyl-[peptide] + H2O = N-terminal L-methionyl-[peptide] + formate. Its function is as follows. Removes the formyl group from the N-terminal Met of newly synthesized proteins. Requires at least a dipeptide for an efficient rate of reaction. N-terminal L-methionine is a prerequisite for activity but the enzyme has broad specificity at other positions. The polypeptide is Peptide deformylase (Bifidobacterium adolescentis (strain ATCC 15703 / DSM 20083 / NCTC 11814 / E194a)).